We begin with the raw amino-acid sequence, 344 residues long: Type II methyltransferase M.FnuDI (344 aa).

In terms of domain architecture, SAM-dependent MTase C5-type spans 1–330 (MKLLSLFSGA…KRIKETLTDK (330 aa)). Residue Cys71 is part of the active site.

The protein belongs to the class I-like SAM-binding methyltransferase superfamily. C5-methyltransferase family.

It carries out the reaction a 2'-deoxycytidine in DNA + S-adenosyl-L-methionine = a 5-methyl-2'-deoxycytidine in DNA + S-adenosyl-L-homocysteine + H(+). Its function is as follows. A methylase, recognizes the double-stranded sequence 5'-GGCC-3', methylates C-? on both strands, and protects the DNA from cleavage by the FnuDI endonuclease. This is Type II methyltransferase M.FnuDI (fnuDIM) from Fusobacterium nucleatum.